The chain runs to 799 residues: Probable inorganic carbon transporter subunit DabA (799 aa).

Zn(2+)-binding residues include Cys-303, Asp-305, His-479, and Cys-494. The tract at residues Ala-574–Ser-598 is disordered.

This sequence belongs to the inorganic carbon transporter (TC 9.A.2) DabA family. In terms of assembly, forms a complex with DabB. It depends on Zn(2+) as a cofactor.

It is found in the cell membrane. Part of an energy-coupled inorganic carbon pump. This chain is Probable inorganic carbon transporter subunit DabA, found in Natronomonas pharaonis (strain ATCC 35678 / DSM 2160 / CIP 103997 / JCM 8858 / NBRC 14720 / NCIMB 2260 / Gabara) (Halobacterium pharaonis).